Consider the following 1419-residue polypeptide: Formin-1 (1419 aa).

A microtubule-binding region spans residues 1–622 (MEGTHCTLQL…TAEPQHQSPP (622 aa)). Disordered regions lie at residues 138–194 (DWQG…MGKD), 262–331 (LGRE…KVVA), 343–641 (VVKT…TPKD), and 685–711 (SLTEQDDRTPGRLQAVWPPPKTKDTEE). Basic residues predominate over residues 151 to 163 (RSTHGNKKPRRSS). The span at 298-317 (SHQDPEKHPEAEKDEMEKPA) shows a compositional bias: basic and acidic residues. Residues 394–411 (RSSQSPAGETASISSVSA) are compositionally biased toward polar residues. Positions 425–438 (IESEKLDEAPEGKR) are enriched in basic and acidic residues. The interval 456–842 (NKRRAGLPLG…LNISSLSQLS (387 aa)) is mediates interaction with alpha-catenin. The segment covering 504-517 (FNNSASQSSTHKQT) has biased composition (polar residues). Over residues 520–529 (VPSPLSPRLP) the composition is skewed to pro residues. Over residues 614–623 (AEPQHQSPPG) the composition is skewed to polar residues. Residues 685–694 (SLTEQDDRTP) show a composition bias toward basic and acidic residues. Residues 720-774 (AEYQAAILHLKREHKEEIENLQAQFELRAFHIRGEHAMITARLEETIENLKHELE) are a coiled coil. Disordered stretches follow at residues 859–978 (GMAS…AIEP) and 1390–1419 (SEKKVETKKINPTASLKERLRQKEASVTTN). Pro residues-rich tracts occupy residues 868 to 882 (LPPPPASIPPPPPLP) and 890 to 958 (PAPP…PPPG). Residues 870 to 957 (PPPASIPPPP…PPGLAPPPPP (88 aa)) form the FH1 domain. Residues 972 to 1388 (RKPAIEPSCP…KMAQESVSKL (417 aa)) form the FH2 domain.

Belongs to the formin homology family. Cappuccino subfamily. Interacts with alpha-catenin and may interact with tubulin. Phosphorylated on serine and possibly threonine residues.

The protein resides in the nucleus. It is found in the cytoplasm. Its subcellular location is the cell junction. The protein localises to the adherens junction. It localises to the cell membrane. Plays a role in the formation of adherens junction and the polymerization of linear actin cables. The polypeptide is Formin-1 (FMN1) (Homo sapiens (Human)).